The sequence spans 122 residues: Small ribosomal subunit protein uS13 (122 aa).

The segment at 97–122 (PVRGQRTKTNARTRKGPARTVAGKKK) is disordered.

It belongs to the universal ribosomal protein uS13 family. In terms of assembly, part of the 30S ribosomal subunit. Forms a loose heterodimer with protein S19. Forms two bridges to the 50S subunit in the 70S ribosome.

In terms of biological role, located at the top of the head of the 30S subunit, it contacts several helices of the 16S rRNA. In the 70S ribosome it contacts the 23S rRNA (bridge B1a) and protein L5 of the 50S subunit (bridge B1b), connecting the 2 subunits; these bridges are implicated in subunit movement. Contacts the tRNAs in the A and P-sites. The sequence is that of Small ribosomal subunit protein uS13 from Pelobacter propionicus (strain DSM 2379 / NBRC 103807 / OttBd1).